The sequence spans 241 residues: 1-(5-phosphoribosyl)-5-[(5-phosphoribosylamino)methylideneamino] imidazole-4-carboxamide isomerase (241 aa).

Asp10 serves as the catalytic Proton acceptor. The active-site Proton donor is Asp131.

This sequence belongs to the HisA/HisF family.

The protein localises to the cytoplasm. The catalysed reaction is 1-(5-phospho-beta-D-ribosyl)-5-[(5-phospho-beta-D-ribosylamino)methylideneamino]imidazole-4-carboxamide = 5-[(5-phospho-1-deoxy-D-ribulos-1-ylimino)methylamino]-1-(5-phospho-beta-D-ribosyl)imidazole-4-carboxamide. It participates in amino-acid biosynthesis; L-histidine biosynthesis; L-histidine from 5-phospho-alpha-D-ribose 1-diphosphate: step 4/9. The protein is 1-(5-phosphoribosyl)-5-[(5-phosphoribosylamino)methylideneamino] imidazole-4-carboxamide isomerase of Bifidobacterium longum (strain DJO10A).